We begin with the raw amino-acid sequence, 765 residues long: Protein BCH2 (765 aa).

Residues 1 to 31 (MSFLWGSTKSKKGKNKKAAGSLPSGVVPQQR) form a disordered region. The segment at 735 to 765 (LECLSKNRNEACLAYERPLPDLPSTIKPLAD) is CHS5-binding.

This sequence belongs to the CHAPS family. Component of the CHS5/6 complex composed of the 4 CHAPS proteins BCH1, BCH2, BUD7, and CHS6 as well as at least CHS5 and GTP-bound ARF1. The complex interacts with the cargo protein CHS3.

The protein resides in the golgi apparatus. It localises to the trans-Golgi network membrane. In terms of biological role, member of the CHS5-ARF1P-binding proteins (CHAPS) which mediates export of specific cargo proteins, including chitin synthase CHS3. The polypeptide is Protein BCH2 (BCH2) (Saccharomyces cerevisiae (strain ATCC 204508 / S288c) (Baker's yeast)).